The chain runs to 341 residues: Probable long-chain-alcohol O-fatty-acyltransferase 9 (341 aa).

7 helical membrane passes run 9 to 29 (IIVWISAIISVSYCYYISANI), 36 to 56 (LFSVLPICGLFFVLPLFFSSV), 82 to 102 (GPLFPVAPNLIQFVCFTCFPI), 122 to 142 (FAIKIMIFGVVLHVYNYSHFL), 146 to 166 (VLLSLCFLHLYVELEILLGPL), 231 to 251 (MGYLVTFLVSGLFHELVYFYI), and 295 to 315 (RLLTMGFVVVTGGLLFFPLFI).

This sequence belongs to the wax synthase family.

It is found in the membrane. The catalysed reaction is a long chain fatty alcohol + a fatty acyl-CoA = a wax ester + CoA. Catalyzes the final step in the synthesis of long-chain linear esters (waxes). This chain is Probable long-chain-alcohol O-fatty-acyltransferase 9, found in Arabidopsis thaliana (Mouse-ear cress).